We begin with the raw amino-acid sequence, 164 residues long: ATP synthase subunit b (164 aa).

The helical transmembrane segment at 4–24 threads the bilayer; the sequence is IHFDLTLVVQVLSFLLLVYIL.

Belongs to the ATPase B chain family. In terms of assembly, F-type ATPases have 2 components, F(1) - the catalytic core - and F(0) - the membrane proton channel. F(1) has five subunits: alpha(3), beta(3), gamma(1), delta(1), epsilon(1). F(0) has three main subunits: a(1), b(2) and c(10-14). The alpha and beta chains form an alternating ring which encloses part of the gamma chain. F(1) is attached to F(0) by a central stalk formed by the gamma and epsilon chains, while a peripheral stalk is formed by the delta and b chains.

It is found in the cell membrane. F(1)F(0) ATP synthase produces ATP from ADP in the presence of a proton or sodium gradient. F-type ATPases consist of two structural domains, F(1) containing the extramembraneous catalytic core and F(0) containing the membrane proton channel, linked together by a central stalk and a peripheral stalk. During catalysis, ATP synthesis in the catalytic domain of F(1) is coupled via a rotary mechanism of the central stalk subunits to proton translocation. Functionally, component of the F(0) channel, it forms part of the peripheral stalk, linking F(1) to F(0). This is ATP synthase subunit b from Desulfitobacterium hafniense (strain Y51).